The chain runs to 220 residues: Deoxyribose-phosphate aldolase (220 aa).

Asp89 (proton donor/acceptor) is an active-site residue. Lys151 serves as the catalytic Schiff-base intermediate with acetaldehyde. Lys180 acts as the Proton donor/acceptor in catalysis.

It belongs to the DeoC/FbaB aldolase family. DeoC type 1 subfamily.

Its subcellular location is the cytoplasm. It catalyses the reaction 2-deoxy-D-ribose 5-phosphate = D-glyceraldehyde 3-phosphate + acetaldehyde. It functions in the pathway carbohydrate degradation; 2-deoxy-D-ribose 1-phosphate degradation; D-glyceraldehyde 3-phosphate and acetaldehyde from 2-deoxy-alpha-D-ribose 1-phosphate: step 2/2. Catalyzes a reversible aldol reaction between acetaldehyde and D-glyceraldehyde 3-phosphate to generate 2-deoxy-D-ribose 5-phosphate. The polypeptide is Deoxyribose-phosphate aldolase (Staphylococcus epidermidis (strain ATCC 12228 / FDA PCI 1200)).